Consider the following 209-residue polypeptide: MSKQKHSASSSRWLKEHFDDKYANEARRKGYRSRAIFKLEEIQQKDKLLKPGMTVVDLGAAPGGWSQYAIGVVGDSGRVIACDILPMDSIAGVSFLQGDFREDAVLEALLERIQPDMVDVVMSDMAPNIAGNNSVDQPRAMYLVELALDMCRQVLAPNGSFVVKVFQGEGFDEYVKEVRNMFKVVKIRKPDSSRARSREVFVVATGYKG.

Positions 63, 65, 83, 99, and 124 each coordinate S-adenosyl-L-methionine. Lys-164 functions as the Proton acceptor in the catalytic mechanism.

The protein belongs to the class I-like SAM-binding methyltransferase superfamily. RNA methyltransferase RlmE family.

Its subcellular location is the cytoplasm. It catalyses the reaction uridine(2552) in 23S rRNA + S-adenosyl-L-methionine = 2'-O-methyluridine(2552) in 23S rRNA + S-adenosyl-L-homocysteine + H(+). In terms of biological role, specifically methylates the uridine in position 2552 of 23S rRNA at the 2'-O position of the ribose in the fully assembled 50S ribosomal subunit. The polypeptide is Ribosomal RNA large subunit methyltransferase E (Vibrio vulnificus (strain CMCP6)).